The primary structure comprises 750 residues: Catalase-peroxidase 1 (750 aa).

A cross-link (tryptophyl-tyrosyl-methioninium (Trp-Tyr) (with M-264)) is located at residues 90-238; it reads WHSAGTYRVM…VSAAHMGLIY (149 aa). The active-site Proton acceptor is H91. The segment at 199–218 is disordered; sequence NEGHKESGVIDGSESKKGHK. Over residues 200-218 the composition is skewed to basic and acidic residues; it reads EGHKESGVIDGSESKKGHK. Positions 238 to 264 form a cross-link, tryptophyl-tyrosyl-methioninium (Tyr-Met) (with W-90); that stretch reads YVNPEGPDGIPDPVAAARDIRTTFSRM. H279 contributes to the heme b binding site.

This sequence belongs to the peroxidase family. Peroxidase/catalase subfamily. Homodimer or homotetramer. Predominantly homodimeric. It depends on heme b as a cofactor. In terms of processing, formation of the three residue Trp-Tyr-Met cross-link is important for the catalase, but not the peroxidase activity of the enzyme.

Its subcellular location is the cytoplasm. It carries out the reaction H2O2 + AH2 = A + 2 H2O. It catalyses the reaction 2 H2O2 = O2 + 2 H2O. Bifunctional enzyme with both catalase and broad-spectrum peroxidase activity. The protein is Catalase-peroxidase 1 of Pyricularia oryzae (strain 70-15 / ATCC MYA-4617 / FGSC 8958) (Rice blast fungus).